The primary structure comprises 566 residues: Urease subunit alpha (566 aa).

Positions 128–566 (GGIDTHIHWI…LPMAQRYFLF (439 aa)) constitute a Urease domain. Ni(2+) is bound by residues His133, His135, and Lys216. An N6-carboxylysine modification is found at Lys216. His218 provides a ligand contact to substrate. Positions 245 and 271 each coordinate Ni(2+). His319 functions as the Proton donor in the catalytic mechanism. Asp359 contributes to the Ni(2+) binding site.

Belongs to the metallo-dependent hydrolases superfamily. Urease alpha subunit family. In terms of assembly, heterotrimer of UreA (gamma), UreB (beta) and UreC (alpha) subunits. Three heterotrimers associate to form the active enzyme. Ni cation serves as cofactor. In terms of processing, carboxylation allows a single lysine to coordinate two nickel ions.

It localises to the cytoplasm. It carries out the reaction urea + 2 H2O + H(+) = hydrogencarbonate + 2 NH4(+). It functions in the pathway nitrogen metabolism; urea degradation; CO(2) and NH(3) from urea (urease route): step 1/1. This chain is Urease subunit alpha, found in Acinetobacter baylyi (strain ATCC 33305 / BD413 / ADP1).